The sequence spans 238 residues: Probable transcriptional regulatory protein M6_Spy0297 (238 aa).

Belongs to the TACO1 family. YeeN subfamily.

It is found in the cytoplasm. This chain is Probable transcriptional regulatory protein M6_Spy0297, found in Streptococcus pyogenes serotype M6 (strain ATCC BAA-946 / MGAS10394).